Reading from the N-terminus, the 170-residue chain is Acetyl-CoA decarbonylase/synthase complex subunit epsilon 2 (170 aa).

It belongs to the CdhB family. In terms of assembly, heterotetramer of two alpha and two epsilon subunits. The ACDS complex is made up of alpha, epsilon, beta, gamma and delta subunits with a probable stoichiometry of (alpha(2)epsilon(2))(4)-beta(8)-(gamma(1)delta(1))(8).

It functions in the pathway one-carbon metabolism; methanogenesis from acetate. Its function is as follows. Part of a complex that catalyzes the reversible cleavage of acetyl-CoA, allowing growth on acetate as sole source of carbon and energy. The alpha-epsilon subcomponent functions as a carbon monoxide dehydrogenase. The precise role of the epsilon subunit is unclear; it may have a stabilizing role within the alpha(2)epsilon(2) component and/or be involved in electron transfer to FAD during a potential FAD-mediated CO oxidation. This is Acetyl-CoA decarbonylase/synthase complex subunit epsilon 2 (cdhB2) from Methanosarcina acetivorans (strain ATCC 35395 / DSM 2834 / JCM 12185 / C2A).